The chain runs to 619 residues: Chaperone protein DnaK (619 aa).

At Thr175 the chain carries Phosphothreonine; by autocatalysis. Positions Asn578 to Lys619 are disordered. The span at Asn589–Asp606 shows a compositional bias: low complexity. A compositionally biased stretch (acidic residues) spans Asn607–Lys619.

This sequence belongs to the heat shock protein 70 family.

Acts as a chaperone. This chain is Chaperone protein DnaK, found in Clostridium perfringens (strain SM101 / Type A).